Consider the following 271-residue polypeptide: Mediator of RNA polymerase II transcription subunit 18 (271 aa).

Residues 89–119 (FGGNPSSSGDPDVSMSGLEEKPSSSSSSYSY) are disordered.

Belongs to the Mediator complex subunit 18 family. As to quaternary structure, component of the Mediator complex.

The protein resides in the nucleus. In terms of biological role, component of the Mediator complex, a coactivator involved in the regulated transcription of nearly all RNA polymerase II-dependent genes. Mediator functions as a bridge to convey information from gene-specific regulatory proteins to the basal RNA polymerase II transcription machinery. Mediator is recruited to promoters by direct interactions with regulatory proteins and serves as a scaffold for the assembly of a functional preinitiation complex with RNA polymerase II and the general transcription factors. In Aspergillus niger (strain ATCC MYA-4892 / CBS 513.88 / FGSC A1513), this protein is Mediator of RNA polymerase II transcription subunit 18 (srb5).